The primary structure comprises 139 residues: MHSRLPVPASLCLLLLLPSVLPASMPGGLSPRDVTDPEVQEAAVFAVEEYNARSTNSNYFKALRLVQAESQVVSGAKYYLTMELVKTSCRKTNGNPKGYQEIQNCRLPPRNQQEKLTCHFEVWSRPWLNKTLLTKVTCN.

Positions 1 to 22 (MHSRLPVPASLCLLLLLPSVLP) are cleaved as a signal peptide. Residues 27 to 127 (GGLSPRDVTD…CHFEVWSRPW (101 aa)) form the Cystatin domain. The Secondary area of contact signature appears at 71 to 75 (QVVSG). Disulfide bonds link C89–C105 and C118–C138.

The protein belongs to the cystatin family. Expressed by the venom gland.

It is found in the secreted. Inhibits various C1 cysteine proteases including cathepsin L, papain and cathepsin B. This protein has no toxic activity and its function in the venom is unknown. It may play a role as housekeeping or regulatory protein. The sequence is that of Cystatin-1 from Crotalus adamanteus (Eastern diamondback rattlesnake).